The chain runs to 288 residues: Bis(5'-nucleosyl)-tetraphosphatase, symmetrical (288 aa).

The protein belongs to the Ap4A hydrolase family.

It catalyses the reaction P(1),P(4)-bis(5'-adenosyl) tetraphosphate + H2O = 2 ADP + 2 H(+). Functionally, hydrolyzes diadenosine 5',5'''-P1,P4-tetraphosphate to yield ADP. The sequence is that of Bis(5'-nucleosyl)-tetraphosphatase, symmetrical from Pseudomonas putida (strain GB-1).